A 557-amino-acid chain; its full sequence is NADP-dependent malic enzyme (557 aa).

The Proton donor role is filled by Tyr-91. Position 144 (Arg-144) interacts with NADP(+). 2 residues coordinate substrate: Arg-144 and Lys-162. Lys-162 (proton acceptor) is an active-site residue. The Mn(2+) site is built by Glu-234 and Asp-235. Asn-238 provides a ligand contact to NADP(+). Asp-258 contacts Mn(2+). NADP(+) contacts are provided by residues 291–294 (AGEA), Ser-325, Asn-397, and Asn-443. Residue Asn-443 coordinates substrate.

Belongs to the malic enzymes family. In terms of assembly, homotetramer. Mg(2+) is required as a cofactor. Requires Mn(2+) as cofactor. Post-translationally, the N-terminus is blocked.

It is found in the cytoplasm. The enzyme catalyses (S)-malate + NADP(+) = pyruvate + CO2 + NADPH. It catalyses the reaction oxaloacetate + H(+) = pyruvate + CO2. This chain is NADP-dependent malic enzyme (ME1), found in Columba livia (Rock dove).